The primary structure comprises 187 residues: UPF0398 protein SH1465 (187 aa).

Belongs to the UPF0398 family.

The chain is UPF0398 protein SH1465 from Staphylococcus haemolyticus (strain JCSC1435).